Consider the following 1603-residue polypeptide: Pentafunctional AROM polypeptide (1603 aa).

Residues 1–384 are 3-dehydroquinate synthase; sequence MGVPTKISIL…YEPRASTVSN (384 aa). NAD(+)-binding positions include 44-46, 81-84, 114-116, and Asp-119; these read DTN, ESSK, and GGV. Arg-130 lines the 7-phospho-2-dehydro-3-deoxy-D-arabino-heptonate pocket. 139 to 140 provides a ligand contact to NAD(+); it reads TT. 7-phospho-2-dehydro-3-deoxy-D-arabino-heptonate-binding residues include Asp-146 and Lys-152. Lys-161 contributes to the NAD(+) binding site. Asn-162 provides a ligand contact to 7-phospho-2-dehydro-3-deoxy-D-arabino-heptonate. NAD(+) is bound by residues 179 to 182 and Asn-190; that span reads FLNT. Glu-194 serves as a coordination point for Zn(2+). Residues 194–197 and Lys-250 contribute to the 7-phospho-2-dehydro-3-deoxy-D-arabino-heptonate site; that span reads EVIK. Glu-260 serves as the catalytic Proton acceptor; for 3-dehydroquinate synthase activity. 7-phospho-2-dehydro-3-deoxy-D-arabino-heptonate is bound by residues 264 to 268 and His-271; that span reads RNLLN. Position 271 (His-271) interacts with Zn(2+). The active-site Proton acceptor; for 3-dehydroquinate synthase activity is His-275. Residues His-287 and Lys-356 each coordinate 7-phospho-2-dehydro-3-deoxy-D-arabino-heptonate. His-287 contacts Zn(2+). Residues 397–842 are EPSP synthase; the sequence is VYPGFPKSLN…WNTLAQTFKV (446 aa). The For EPSP synthase activity role is filled by Cys-824. The interval 872 to 1064 is shikimate kinase; sequence AASIFIIGMR…RRKENTFFVS (193 aa). 879-886 serves as a coordination point for ATP; that stretch reads GMRGAGKT. Residues 1065-1285 are 3-dehydroquinase; the sequence is LTFPDLTPAS…AAPGQLSARE (221 aa). His-1188 functions as the Proton acceptor; for 3-dehydroquinate dehydratase activity in the catalytic mechanism. Lys-1216 serves as the catalytic Schiff-base intermediate with substrate; for 3-dehydroquinate dehydratase activity. Positions 1298–1603 are shikimate dehydrogenase; the sequence is AKKFAVIGKP…GVSSSDDTIS (306 aa).

This sequence in the N-terminal section; belongs to the sugar phosphate cyclases superfamily. Dehydroquinate synthase family. It in the 2nd section; belongs to the EPSP synthase family. In the 3rd section; belongs to the shikimate kinase family. The protein in the 4th section; belongs to the type-I 3-dehydroquinase family. This sequence in the C-terminal section; belongs to the shikimate dehydrogenase family. As to quaternary structure, homodimer. It depends on Zn(2+) as a cofactor.

It localises to the cytoplasm. It catalyses the reaction 7-phospho-2-dehydro-3-deoxy-D-arabino-heptonate = 3-dehydroquinate + phosphate. The enzyme catalyses 3-dehydroquinate = 3-dehydroshikimate + H2O. The catalysed reaction is shikimate + NADP(+) = 3-dehydroshikimate + NADPH + H(+). It carries out the reaction shikimate + ATP = 3-phosphoshikimate + ADP + H(+). It catalyses the reaction 3-phosphoshikimate + phosphoenolpyruvate = 5-O-(1-carboxyvinyl)-3-phosphoshikimate + phosphate. It functions in the pathway metabolic intermediate biosynthesis; chorismate biosynthesis; chorismate from D-erythrose 4-phosphate and phosphoenolpyruvate: step 2/7. The protein operates within metabolic intermediate biosynthesis; chorismate biosynthesis; chorismate from D-erythrose 4-phosphate and phosphoenolpyruvate: step 3/7. It participates in metabolic intermediate biosynthesis; chorismate biosynthesis; chorismate from D-erythrose 4-phosphate and phosphoenolpyruvate: step 4/7. Its pathway is metabolic intermediate biosynthesis; chorismate biosynthesis; chorismate from D-erythrose 4-phosphate and phosphoenolpyruvate: step 5/7. It functions in the pathway metabolic intermediate biosynthesis; chorismate biosynthesis; chorismate from D-erythrose 4-phosphate and phosphoenolpyruvate: step 6/7. Its function is as follows. The AROM polypeptide catalyzes 5 consecutive enzymatic reactions in prechorismate polyaromatic amino acid biosynthesis. The polypeptide is Pentafunctional AROM polypeptide (Paracoccidioides brasiliensis (strain Pb03)).